We begin with the raw amino-acid sequence, 284 residues long: Bifunctional protein FolD (284 aa).

NADP(+)-binding positions include 165-167, S190, and I231; that span reads GAS.

It belongs to the tetrahydrofolate dehydrogenase/cyclohydrolase family. In terms of assembly, homodimer.

It carries out the reaction (6R)-5,10-methylene-5,6,7,8-tetrahydrofolate + NADP(+) = (6R)-5,10-methenyltetrahydrofolate + NADPH. The enzyme catalyses (6R)-5,10-methenyltetrahydrofolate + H2O = (6R)-10-formyltetrahydrofolate + H(+). The protein operates within one-carbon metabolism; tetrahydrofolate interconversion. In terms of biological role, catalyzes the oxidation of 5,10-methylenetetrahydrofolate to 5,10-methenyltetrahydrofolate and then the hydrolysis of 5,10-methenyltetrahydrofolate to 10-formyltetrahydrofolate. The polypeptide is Bifunctional protein FolD (Polynucleobacter necessarius subsp. necessarius (strain STIR1)).